A 183-amino-acid polypeptide reads, in one-letter code: Ferredoxin-2, mitochondrial (183 aa).

The transit peptide at 1–52 (MAASMARGGVSARVLLQAARGTWWNRPGGTSGSGEGVALGTTRKFQATGSRP) directs the protein to the mitochondrion. The disordered stretch occupies residues 45–65 (FQATGSRPAGEEDAGGPERPG). Residues 68–170 (VNVVFVDRSG…GAEFTLPKIT (103 aa)) enclose the 2Fe-2S ferredoxin-type domain. Residues Cys105, Cys111, Cys114, and Cys151 each coordinate [2Fe-2S] cluster.

This sequence belongs to the adrenodoxin/putidaredoxin family. As to quaternary structure, component of the mitochondrial core iron-sulfur cluster (ISC) complex composed of NFS1, LYRM4, NDUFAB1, ISCU, FXN, and FDX2; this complex is a heterohexamer containing two copies of each monomer. Form a heterodimer complex with NFS1. Interacts (in both their reduced and oxidized states) with the cysteine desulfurase complex; this interaction stimulates cysteine desulfurase activity, and serves as a reductant for Fe-S cluster assembly. Requires [2Fe-2S] cluster as cofactor. Widely expressed, with highest levels in testis, kidney and brain (at protein level). Expressed in muscle (at protein level). Expressed in fibroblasts (at protein level).

The protein localises to the mitochondrion. It is found in the mitochondrion matrix. Electron donor, of the core iron-sulfur cluster (ISC) assembly complex, that acts to reduce the persulfide into sulfide during [2Fe-2S] clusters assembly on the scaffolding protein ISCU. The core iron-sulfur cluster (ISC) assembly complex is involved in the de novo synthesis of a [2Fe-2S] cluster, the first step of the mitochondrial iron-sulfur protein biogenesis. This process is initiated by the cysteine desulfurase complex (NFS1:LYRM4:NDUFAB1) that produces persulfide which is delivered on the scaffold protein ISCU in a FXN-dependent manner. Then this complex is stabilized by FDX2 which provides reducing equivalents to accomplish the [2Fe-2S] cluster assembly. Finally, the [2Fe-2S] cluster is transferred from ISCU to chaperone proteins, including HSCB, HSPA9 and GLRX5. Essential for coenzyme Q biosynthesis: together with FDXR, transfers the electrons required for the hydroxylation reaction performed by COQ6. This is Ferredoxin-2, mitochondrial from Homo sapiens (Human).